Here is a 1257-residue protein sequence, read N- to C-terminus: RAF-like serine/threonine-protein kinase 24 (1257 aa).

The disordered stretch occupies residues 1 to 21 (MDQAKGYEHVRYTAPDPRDEG). One can recognise a PB1 domain in the interval 191-277 (PRDQKLRYVG…EKPRMFLFSS (87 aa)). Basic and acidic residues-rich tracts occupy residues 457–480 (VQDP…KVND) and 493–502 (KEPKMRRESS). Disordered regions lie at residues 457–629 (VQDP…RTSQ) and 761–789 (SQSE…VPQG). Residue serine 474 is modified to Phosphoserine. Residues 533–548 (TQTSSSTPDPSSSTLS) show a composition bias toward low complexity. Over residues 550 to 576 (KSLRKSEDHVENNLSAKEPKMRKEHST) the composition is skewed to basic and acidic residues. Serine 555 carries the phosphoserine modification. Low complexity predominate over residues 583-593 (SVSSVSSDSMV). The span at 769–782 (ETNTPEHVSQTETS) shows a compositional bias: polar residues. Position 777 is a phosphoserine (serine 777). The 266-residue stretch at 974–1239 (LEELKELGSG…PEIARRLRTM (266 aa)) folds into the Protein kinase domain. Residues 980-988 (LGSGTFGTV) and lysine 1001 contribute to the ATP site. Residue serine 1013 is modified to Phosphoserine. Aspartate 1102 functions as the Proton acceptor in the catalytic mechanism.

The protein belongs to the protein kinase superfamily. Ser/Thr protein kinase family. In terms of processing, hyperphosphorylated in response to auxin in an ABP1- and TMK1-dependent manner.

The protein localises to the cytoplasm. It carries out the reaction L-seryl-[protein] + ATP = O-phospho-L-seryl-[protein] + ADP + H(+). It catalyses the reaction L-threonyl-[protein] + ATP = O-phospho-L-threonyl-[protein] + ADP + H(+). Activated by auxin via rapid phosphorylation downstream of ABP1 and TMK1 signaling. RAF-like protein kinase acting, together with RAF20, as a central mediator of a fast response pathway to auxin involving proteins phosphorylation, and leading to rapid cellular responses including membrane depolarization and cytoplasmic streaming. Required for general growth and developmental process. This is RAF-like serine/threonine-protein kinase 24 from Arabidopsis thaliana (Mouse-ear cress).